The primary structure comprises 207 residues: Large ribosomal subunit protein uL4 (207 aa).

The segment at K48–G70 is disordered.

Belongs to the universal ribosomal protein uL4 family. In terms of assembly, part of the 50S ribosomal subunit.

In terms of biological role, one of the primary rRNA binding proteins, this protein initially binds near the 5'-end of the 23S rRNA. It is important during the early stages of 50S assembly. It makes multiple contacts with different domains of the 23S rRNA in the assembled 50S subunit and ribosome. Its function is as follows. Forms part of the polypeptide exit tunnel. The protein is Large ribosomal subunit protein uL4 of Francisella tularensis subsp. holarctica (strain FTNF002-00 / FTA).